The primary structure comprises 496 residues: Probable cytosol aminopeptidase (496 aa).

Mn(2+) contacts are provided by lysine 266 and aspartate 271. Lysine 278 is a catalytic residue. Residues aspartate 289, aspartate 348, and glutamate 350 each contribute to the Mn(2+) site. The active site involves arginine 352.

The protein belongs to the peptidase M17 family. Mn(2+) serves as cofactor.

Its subcellular location is the cytoplasm. The enzyme catalyses Release of an N-terminal amino acid, Xaa-|-Yaa-, in which Xaa is preferably Leu, but may be other amino acids including Pro although not Arg or Lys, and Yaa may be Pro. Amino acid amides and methyl esters are also readily hydrolyzed, but rates on arylamides are exceedingly low.. The catalysed reaction is Release of an N-terminal amino acid, preferentially leucine, but not glutamic or aspartic acids.. Functionally, presumably involved in the processing and regular turnover of intracellular proteins. Catalyzes the removal of unsubstituted N-terminal amino acids from various peptides. The sequence is that of Probable cytosol aminopeptidase from Pseudomonas fluorescens (strain Pf0-1).